Here is an 81-residue protein sequence, read N- to C-terminus: uncharacterized protein (81 aa).

A disordered region spans residues 1-58 (MPQSKQQFKRQGARQRDSKGKFVKARTGMATAPPAAVSTAAPTASTMTPTGSSTTATI). The span at 30-58 (ATAPPAAVSTAAPTASTMTPTGSSTTATI) shows a compositional bias: low complexity.

This is an uncharacterized protein from Caenorhabditis elegans.